A 315-amino-acid polypeptide reads, in one-letter code: Methionyl-tRNA formyltransferase (315 aa).

Residues 2–189 form an N-terminal domain region; sequence SESLRIIFAG…LITTLKQLAD (188 aa). Residue 113–116 coordinates (6S)-5,6,7,8-tetrahydrofolate; that stretch reads SLLP. The segment at 210-315 is C-terminal domain; sequence KEEARIDWSL…EWFVPGNRLV (106 aa).

This sequence belongs to the Fmt family.

The catalysed reaction is L-methionyl-tRNA(fMet) + (6R)-10-formyltetrahydrofolate = N-formyl-L-methionyl-tRNA(fMet) + (6S)-5,6,7,8-tetrahydrofolate + H(+). Its function is as follows. Attaches a formyl group to the free amino group of methionyl-tRNA(fMet). The formyl group appears to play a dual role in the initiator identity of N-formylmethionyl-tRNA by promoting its recognition by IF2 and preventing the misappropriation of this tRNA by the elongation apparatus. The chain is Methionyl-tRNA formyltransferase from Escherichia coli O157:H7.